The primary structure comprises 785 residues: uncharacterized protein (785 aa).

Over residues 53 to 65 (KNTLTGSHGSNDL) the composition is skewed to polar residues. Residues 53–162 (KNTLTGSHGS…RKAADEQGPI (110 aa)) form a disordered region. Over residues 66–79 (ATDESLDSPEDEEA) the composition is skewed to acidic residues. Polar residues predominate over residues 81–94 (SPLQLGTPTSTTSG). At S215 the chain carries Phosphoserine. Disordered stretches follow at residues 571-590 (KVVD…TSVN) and 631-657 (DSSG…RIQF). The span at 575-584 (SDDEESDSDE) shows a compositional bias: acidic residues. S667 is modified (phosphoserine). Residues 693-785 (DPKMKFTSHP…FGSIFKKVFG (93 aa)) are disordered. The span at 725–739 (RKAHHHHHHHNHVSR) shows a compositional bias: basic residues. Residues 776 to 785 (FGSIFKKVFG) show a composition bias toward low complexity.

This is an uncharacterized protein from Saccharomyces cerevisiae (strain ATCC 204508 / S288c) (Baker's yeast).